The following is a 1402-amino-acid chain: DNA-directed RNA polymerase subunit beta' (1402 aa).

Cys71, Cys73, Cys86, and Cys89 together coordinate Zn(2+). Mg(2+) is bound by residues Asp462, Asp464, and Asp466. Zn(2+) contacts are provided by Cys811, Cys885, Cys892, and Cys895. Residues 1379–1402 (RKGTGAGSANQMLQDMTDQVPAAE) form a disordered region. The span at 1385–1395 (GSANQMLQDMT) shows a compositional bias: polar residues.

It belongs to the RNA polymerase beta' chain family. The RNAP catalytic core consists of 2 alpha, 1 beta, 1 beta' and 1 omega subunit. When a sigma factor is associated with the core the holoenzyme is formed, which can initiate transcription. It depends on Mg(2+) as a cofactor. Zn(2+) is required as a cofactor.

It carries out the reaction RNA(n) + a ribonucleoside 5'-triphosphate = RNA(n+1) + diphosphate. Its function is as follows. DNA-dependent RNA polymerase catalyzes the transcription of DNA into RNA using the four ribonucleoside triphosphates as substrates. The sequence is that of DNA-directed RNA polymerase subunit beta' from Agrobacterium fabrum (strain C58 / ATCC 33970) (Agrobacterium tumefaciens (strain C58)).